The sequence spans 239 residues: Probable 2-phosphosulfolactate phosphatase (239 aa).

It belongs to the ComB family. Mg(2+) is required as a cofactor.

The enzyme catalyses (2R)-O-phospho-3-sulfolactate + H2O = (2R)-3-sulfolactate + phosphate. The polypeptide is Probable 2-phosphosulfolactate phosphatase (Clostridium botulinum (strain Kyoto / Type A2)).